The sequence spans 101 residues: Small ribosomal subunit protein uS14 (101 aa).

Belongs to the universal ribosomal protein uS14 family. As to quaternary structure, part of the 30S ribosomal subunit. Contacts proteins S3 and S10.

Binds 16S rRNA, required for the assembly of 30S particles and may also be responsible for determining the conformation of the 16S rRNA at the A site. The polypeptide is Small ribosomal subunit protein uS14 (Shewanella woodyi (strain ATCC 51908 / MS32)).